The chain runs to 267 residues: Putative metal-binding protein TM_0123 (267 aa).

A signal peptide spans 1–15; it reads MKKILLLLVLIVAVL. Residues H53, H107, and H172 each coordinate a divalent metal cation.

This sequence belongs to the bacterial solute-binding protein 9 family.

It localises to the periplasm. In terms of biological role, part of an ATP-binding cassette (ABC) transport system involved in metal import. Binds a metal with high affinity and specificity and delivers it to the membrane permease for translocation into the cytoplasm. This chain is Putative metal-binding protein TM_0123, found in Thermotoga maritima (strain ATCC 43589 / DSM 3109 / JCM 10099 / NBRC 100826 / MSB8).